A 296-amino-acid polypeptide reads, in one-letter code: MTTILTRPADGEGSVQVHQDPALNIQEETLVIAVYGKGGIGKSTTSSNLSAAFSKLGKRVLQIGCDPKHDSTFTLTHKMVPTVIDILEEVDFHSEELRPEDFVFTGFNGVQCVESGGPPAGTGCGGYVTGQTVKLLKEHHLLEDTDVVIFDVLGDVVCGGFAAPLQHANYCLIVTANDFDSIFAMNRIVQAIQAKAKNYKVRLGGVVANRSADTDQIDKFNERTGLRTMAHFRDVDAIRRSRLKKCTIFEMDDADEAVQAVQNEYLRLAQNMLDKVEPLEATSLKDREIFDLLGFD.

ATP is bound by residues 39 to 44 and K68; that span reads GIGKST. S43 contributes to the Mg(2+) binding site. Residues C124 and C158 each coordinate [4Fe-4S] cluster. 209 to 210 lines the ATP pocket; that stretch reads NR.

Belongs to the NifH/BchL/ChlL family. As to quaternary structure, homodimer. Protochlorophyllide reductase is composed of three subunits; ChlL, ChlN and ChlB. It depends on [4Fe-4S] cluster as a cofactor.

It carries out the reaction chlorophyllide a + oxidized 2[4Fe-4S]-[ferredoxin] + 2 ADP + 2 phosphate = protochlorophyllide a + reduced 2[4Fe-4S]-[ferredoxin] + 2 ATP + 2 H2O. The protein operates within porphyrin-containing compound metabolism; chlorophyll biosynthesis (light-independent). Component of the dark-operative protochlorophyllide reductase (DPOR) that uses Mg-ATP and reduced ferredoxin to reduce ring D of protochlorophyllide (Pchlide) to form chlorophyllide a (Chlide). This reaction is light-independent. The L component serves as a unique electron donor to the NB-component of the complex, and binds Mg-ATP. The protein is Light-independent protochlorophyllide reductase iron-sulfur ATP-binding protein of Synechococcus sp. (strain CC9605).